Consider the following 1086-residue polypeptide: NAD(P) transhydrogenase, mitochondrial (1086 aa).

Residues Met-1–Trp-43 constitute a mitochondrion transit peptide. Residues Cys-44–Thr-474 lie on the Mitochondrial matrix side of the membrane. Residue Lys-70 is modified to N6-acetyllysine. Lys-117 carries the post-translational modification N6-succinyllysine. Residue Arg-182–Thr-184 participates in NAD(+) binding. Lys-224 is modified (N6-succinyllysine). Residues Val-237, Asp-257–Arg-259, and Gly-287 contribute to the NAD(+) site. Lys-294 carries the post-translational modification N6-succinyllysine. Positions 300 and 319 each coordinate NAD(+). Position 331 is an N6-succinyllysine (Lys-331). Residue Lys-397 is modified to N6-acetyllysine. 4 helical membrane-spanning segments follow: residues Thr-475–Ala-493, Met-501–Pro-521, Leu-527–Met-546, and Ser-558–Thr-578. At Gln-579 to Asn-595 the chain is on the mitochondrial matrix side. 5 consecutive transmembrane segments (helical) span residues Tyr-596 to Gly-616, Ile-622 to Gly-642, Leu-646 to Leu-666, Leu-672 to Ala-691, and Leu-702 to Tyr-722. The Cytoplasmic portion of the chain corresponds to Ile-723–Lys-739. 5 helical membrane passes run Ile-740 to Tyr-760, His-778 to Ala-797, Phe-801 to Gly-819, Val-833 to Leu-853, and Leu-857 to Ala-879. The Mitochondrial matrix portion of the chain corresponds to Met-880–Lys-1086. NADP(+) contacts are provided by residues Tyr-933, Val-965–Pro-970, Gly-1007–Thr-1011, Gly-1026–Met-1027, Lys-1042–Tyr-1049, and Asp-1068–Ala-1069. At Lys-1079 the chain carries N6-succinyllysine.

This sequence in the N-terminal section; belongs to the AlaDH/PNT family. In the C-terminal section; belongs to the PNT beta subunit family. Homodimer. Widely expressed with expression most readily detectable in adrenal, heart, kidney, thyroid and adipose tissues.

The protein resides in the mitochondrion inner membrane. The catalysed reaction is NAD(+) + NADPH + H(+)(in) = NADH + NADP(+) + H(+)(out). The transhydrogenation between NADH and NADP is coupled to respiration and ATP hydrolysis and functions as a proton pump across the membrane. May play a role in reactive oxygen species (ROS) detoxification in the adrenal gland. This is NAD(P) transhydrogenase, mitochondrial (Nnt) from Mus musculus (Mouse).